A 534-amino-acid chain; its full sequence is uncharacterized protein (534 aa).

The signal sequence occupies residues 1-22 (MGLRLLFSLICVFCISNIFTQA). An N-linked (GlcNAc...) asparagine glycan is attached at N31. Disordered regions lie at residues 70–145 (PTYY…SSVS) and 176–418 (SSLS…SSAP). N426 carries N-linked (GlcNAc...) asparagine glycosylation.

The protein resides in the endoplasmic reticulum. Its subcellular location is the cell membrane. This is an uncharacterized protein from Schizosaccharomyces pombe (strain 972 / ATCC 24843) (Fission yeast).